Reading from the N-terminus, the 498-residue chain is ATP synthase subunit beta, chloroplastic (498 aa).

172-179 serves as a coordination point for ATP; the sequence is GGAGVGKT.

Belongs to the ATPase alpha/beta chains family. In terms of assembly, F-type ATPases have 2 components, CF(1) - the catalytic core - and CF(0) - the membrane proton channel. CF(1) has five subunits: alpha(3), beta(3), gamma(1), delta(1), epsilon(1). CF(0) has four main subunits: a(1), b(1), b'(1) and c(9-12).

It is found in the plastid. It localises to the chloroplast thylakoid membrane. The catalysed reaction is ATP + H2O + 4 H(+)(in) = ADP + phosphate + 5 H(+)(out). Produces ATP from ADP in the presence of a proton gradient across the membrane. The catalytic sites are hosted primarily by the beta subunits. The sequence is that of ATP synthase subunit beta, chloroplastic from Trochodendron aralioides (Wheel tree).